Reading from the N-terminus, the 1011-residue chain is MDTCSQESEPLQTKESPINNAGKTPLVLGNGKLVTPHKQAAEMTPNCYTSETFKSPLNFSTVTVEQLGISPESFVNNSSGKSSPYLKKSRRRSTVGLRGLPETNHLIRFVAEQRSLKNASLTQTSPFQGSPALYRNVYSLREQMSAFHLAFNSIKENEKMTDCPEFSEAEGVFKTRGSTKKESLGECQLSEFSAQSSSKRRRLSSPSSSDVNLTDAVDLQACGVNMAACPSTDMKCAVETCAGLSQKSSASGLNLQCGCLMNESPLLSELTEASSGIQDAASVEERGSNDAVSVDKCTEVSTDTAPEVRSLVTPLCQKDLPSSKTFVLRSVLKKPAVKLCVESLQEHLDNLYNDETCPSLTSSLANSCKEQTAALPNTKKRKRVTFGEDLSPEVLDESLPANTPLRKGQTPVRKKDLSSLSPPLLEQSPVPEWLPQPNFDDKEENLENIEPLQVSFAVLSSLNMSSIAETLSGTDTSASSSNHENIAPFRVGRATRTSDRRSKLISFSQESVCNLLNAEAQPCKEKKTNRRKSQESKHADKVLPRKNRVLKGCKKKKGKGKRKGVQKSLYGERDLASKKPLLSPIPELPEVSETPLVGSLVRRTYPDDFNSNGKFEEMMLPKRENLLSQDPEDWQVIQGFNKDNASESCSSDMKSSSSFSNATFEQDANINSIEMDENENIPKAITLESENERKTGTECENSHISCTLVTVTPVVSDNPKPDFPLQSQELSAAGQNVENLFQIVKISEDMNIKCEKQSGFSVIPEDKLQTEHLIPDSQKECDCSEDVLTDQRKVSKSQGEDLGRNSAASCSGVSDRERKYRGHSVGGSDGPGLHLERTNNLQTSYSMSSLVEISLENSELCKDLSDSIEQSLQRTKSETKVRRSLRLQKSLEREGGLVWVSPPPPPASCTSQRTKRRTVGTLDSRGFEPVSSRQDPCTLPSTSSEENGEGFTAAPDASLPGKRRRRSFCTSTLANPKSTTQSRGCKRRSFLGQKRENTLQETSRESDLSEN.

Polar residues predominate over residues 1 to 22 (MDTCSQESEPLQTKESPINNAG). A disordered region spans residues 1–26 (MDTCSQESEPLQTKESPINNAGKTPL). Phosphoserine occurs at positions 125, 130, 209, 293, and 310. T313 bears the Phosphothreonine mark. The PP1-binding domain occupies 380 to 440 (KRKRVTFGED…PEWLPQPNFD (61 aa)). Phosphoserine is present on residues S391 and S398. Disordered stretches follow at residues 395–438 (LDES…PQPN) and 522–544 (PCKE…KVLP). Position 403 is a phosphothreonine (T403). A compositionally biased stretch (low complexity) spans 418 to 431 (SSLSPPLLEQSPVP). S428 bears the Phosphoserine mark. The segment covering 522–543 (PCKEKKTNRRKSQESKHADKVL) has biased composition (basic and acidic residues). A phosphoserine mark is found at S583, S702, and S747. K753 participates in a covalent cross-link: Glycyl lysine isopeptide (Lys-Gly) (interchain with G-Cter in SUMO2). A compositionally biased stretch (basic and acidic residues) spans 790–803 (DQRKVSKSQGEDLG). Disordered stretches follow at residues 790-835 (DQRK…GLHL) and 896-1011 (GLVW…LSEN). Residues 931 to 945 (SSRQDPCTLPSTSSE) are compositionally biased toward polar residues. S967 is subject to Phosphoserine. Polar residues predominate over residues 968-983 (FCTSTLANPKSTTQSR). Residues 993–1011 (QKRENTLQETSRESDLSEN) show a composition bias toward basic and acidic residues.

In terms of assembly, interacts with PPP1CC. Post-translationally, phosphorylated by CDK1. May regulate its subcellular location.

It localises to the nucleus. Regulator of chromosome structure during mitosis required for condensin-depleted chromosomes to retain their compact architecture through anaphase. Acts by mediating the recruitment of phopsphatase PP1-gamma subunit (PPP1CC) to chromatin at anaphase and into the following interphase. At anaphase onset, its association with chromatin targets a pool of PPP1CC to dephosphorylate substrates. In Bos taurus (Bovine), this protein is Cell division cycle-associated protein 2 (CDCA2).